Here is a 58-residue protein sequence, read N- to C-terminus: Dortoxin (58 aa).

The region spanning 3 to 58 (VPGNYPLDKDGNTYTCLKLGENKDCQKVCKLHGVQYGYCYAFECWCKEYLDDKDSV) is the LCN-type CS-alpha/beta domain. 3 cysteine pairs are disulfide-bonded: C18–C41, C27–C46, and C31–C48.

Expressed by the venom gland.

The protein resides in the secreted. Functionally, binds to sodium channels (Nav) and affects the channel activation process. In mice, causes hyperactivity that persists until death. The polypeptide is Dortoxin (Parabuthus transvaalicus (Transvaal thick-tailed scorpion)).